Here is a 67-residue protein sequence, read N- to C-terminus: Conotoxin TsMMSK-B021 (67 aa).

Residues 1–20 form the signal peptide; sequence MMSKLGVLLTICLLLFPLTA. Positions 21–50 are excised as a propeptide; the sequence is VQLDGDQPADLPELRAQDFAPERSPWFDPV. Cystine bridges form between C53-C65, C54-C61, and C58-C64. Position 63 is a 4-hydroxyproline (P63).

It belongs to the conotoxin M superfamily. As to expression, expressed by the venom duct.

The protein localises to the secreted. This Conus tessulatus (Tessellate cone) protein is Conotoxin TsMMSK-B021.